Consider the following 345-residue polypeptide: Ribosomal RNA small subunit methyltransferase C (345 aa).

This sequence belongs to the methyltransferase superfamily. RsmC family. As to quaternary structure, monomer.

Its subcellular location is the cytoplasm. The catalysed reaction is guanosine(1207) in 16S rRNA + S-adenosyl-L-methionine = N(2)-methylguanosine(1207) in 16S rRNA + S-adenosyl-L-homocysteine + H(+). Functionally, specifically methylates the guanine in position 1207 of 16S rRNA in the 30S particle. The protein is Ribosomal RNA small subunit methyltransferase C of Shewanella denitrificans (strain OS217 / ATCC BAA-1090 / DSM 15013).